The sequence spans 53 residues: Rubredoxin (53 aa).

The 52-residue stretch at 1–52 (MAKWRCKICGYIYDEDEGDPDNGISPGTKFEDLPDDWVCPLCGAPKSEFERI) folds into the Rubredoxin-like domain. Cys6, Cys9, Cys39, and Cys42 together coordinate Fe cation.

The protein belongs to the rubredoxin family. It depends on Fe(3+) as a cofactor.

In terms of biological role, rubredoxin is a small nonheme, iron protein lacking acid-labile sulfide. Its single Fe, chelated to 4 Cys, functions as an electron acceptor and may also stabilize the conformation of the molecule. This Pyrococcus abyssi (strain GE5 / Orsay) protein is Rubredoxin (rub).